Reading from the N-terminus, the 270-residue chain is 4-hydroxy-tetrahydrodipicolinate reductase (270 aa).

7 to 12 contributes to the NAD(+) binding site; that stretch reads GVSGRM. NADP(+) is bound at residue arginine 34. NAD(+) contacts are provided by residues 97–99 and 121–124; these read GTT and SGNM. The active-site Proton donor/acceptor is histidine 155. Position 156 (histidine 156) interacts with (S)-2,3,4,5-tetrahydrodipicolinate. Lysine 159 acts as the Proton donor in catalysis. 165 to 166 serves as a coordination point for (S)-2,3,4,5-tetrahydrodipicolinate; that stretch reads GT.

This sequence belongs to the DapB family.

It is found in the cytoplasm. It catalyses the reaction (S)-2,3,4,5-tetrahydrodipicolinate + NAD(+) + H2O = (2S,4S)-4-hydroxy-2,3,4,5-tetrahydrodipicolinate + NADH + H(+). The catalysed reaction is (S)-2,3,4,5-tetrahydrodipicolinate + NADP(+) + H2O = (2S,4S)-4-hydroxy-2,3,4,5-tetrahydrodipicolinate + NADPH + H(+). The protein operates within amino-acid biosynthesis; L-lysine biosynthesis via DAP pathway; (S)-tetrahydrodipicolinate from L-aspartate: step 4/4. In terms of biological role, catalyzes the conversion of 4-hydroxy-tetrahydrodipicolinate (HTPA) to tetrahydrodipicolinate. In Allorhizobium ampelinum (strain ATCC BAA-846 / DSM 112012 / S4) (Agrobacterium vitis (strain S4)), this protein is 4-hydroxy-tetrahydrodipicolinate reductase.